The sequence spans 345 residues: Skn-1 dependent zygotic transcript 15 protein (345 aa).

One can recognise an F-box domain in the interval 11 to 55; that stretch reads AFGLHKLPHLVSDKVVKSMVPMELFTYSMVAEETKALVKRLFKKV.

In terms of biological role, may have a role in embryogenesis. This chain is Skn-1 dependent zygotic transcript 15 protein (sdz-15), found in Caenorhabditis elegans.